The sequence spans 151 residues: Small heat shock protein HspD (151 aa).

The 111-residue stretch at R28–A138 folds into the sHSP domain.

Belongs to the small heat shock protein (HSP20) family.

The chain is Small heat shock protein HspD (hspD) from Bradyrhizobium diazoefficiens (strain JCM 10833 / BCRC 13528 / IAM 13628 / NBRC 14792 / USDA 110).